The primary structure comprises 767 residues: MCGSALAFLTAALLSLHNCQRGPALVLGAAWVFSLVLGLGQSEHNRCGSANVVSCARCLQLGPECGWCVQEDFVSGGSGSERCDTVSSLISKGCPVDSIEYLSVHVVTSSENEINTQVTPGEVSVQLHPGAEANFMLKVRPLKKYPVDLYYLVDVSASMHNNIEKLNSVGNDLSKKMALYSRDFRLGFGSYVDKTVSPYISIHPERIHNQCSDYNLDCMPPHGYIHVLSLTENITEFEKAVHRQKISGNIDTPEGGFDAMLQAAVCESHIGWRKEAKRLLLVMTDQTSHLALDSKLAGIVVPNDGNCHLKNNVYVKSTTMEHPSLGQLSEKLIDNNINVIFAVQGKQFHWYKDLLPLLPGAIAGEIESKAANLNNLVVEAYKKIISEVKVQLENQVHGVHFNITAICPDGARKPGISGCGNVTSNDEVLFNVTVVMKTCDIMGGKNYAIIKPIGFNETTKVHIHRSCSCQCENHRGLKGQCAEAAPDPKCPQCDDSRCHFDEDQFPSETCKPQEDQPVCSGRGVCICGKCLCHKTKLGRVYGQYCEKDDFSCPYLHGDVCAGHGECEGGRCQCFSGWEGDRCQCPSASAQHCVNSKGQVCSGRGTCVCGRCECTDPRSIGRLCEHCPTCHLSCSENWNCLQCLHPHNLSQAALDQCKSSCAVMEQHRMDQTSECLSGPSYLRIFFIIFIVTFLIGLLKVLIIRQVILQWNNNKIKSSSDYRMSASKKDKLILQSVCTRAVTYRREKPEEIKMDISKLNAQEAFRCNF.

Positions 1 to 21 (MCGSALAFLTAALLSLHNCQR) are cleaved as a signal peptide. At 22–681 (GPALVLGAAW…SECLSGPSYL (660 aa)) the chain is on the extracellular side. The PSI domain occupies 46-95 (RCGSANVVSCARCLQLGPECGWCVQEDFVSGGSGSERCDTVSSLISKGCP). 25 disulfides stabilise this stretch: Cys-47/Cys-65, Cys-55/Cys-469, Cys-58/Cys-83, Cys-68/Cys-94, Cys-211/Cys-218, Cys-266/Cys-307, Cys-407/Cys-419, Cys-439/Cys-467, Cys-471/Cys-490, Cys-471/Cys-493, Cys-481/Cys-493, Cys-498/Cys-527, Cys-510/Cys-525, Cys-519/Cys-530, Cys-532/Cys-545, Cys-552/Cys-566, Cys-560/Cys-571, Cys-573/Cys-582, Cys-584/Cys-608, Cys-592/Cys-606, Cys-600/Cys-611, Cys-613/Cys-623, Cys-626/Cys-629, Cys-633/Cys-660, and Cys-639/Cys-656. In terms of domain architecture, VWFA spans 146–384 (PVDLYYLVDV…NLVVEAYKKI (239 aa)). 2 residues coordinate Mg(2+): Asp-154 and Ser-156. Asp-193 is a binding site for Ca(2+). N-linked (GlcNAc...) asparagine glycosylation is present at Asn-233. Ca(2+) contacts are provided by Asn-249, Asp-251, Pro-253, and Glu-254. Mg(2+) is bound at residue Glu-254. Asn-402 carries N-linked (GlcNAc...) asparagine glycosylation. 3 N-linked (GlcNAc...) asparagine glycosylation sites follow: Asn-421, Asn-431, and Asn-456. I-EGF domains follow at residues 471–494 (CENH…PQCD), 498–546 (CHFD…QYCE), 547–583 (KDDF…DRCQ), and 584–624 (CPSA…RLCE). Asn-647 carries an N-linked (GlcNAc...) asparagine glycan. A helical membrane pass occupies residues 682–702 (RIFFIIFIVTFLIGLLKVLII). Topologically, residues 703 to 767 (RQVILQWNNN…NAQEAFRCNF (65 aa)) are cytoplasmic.

Belongs to the integrin beta chain family. As to quaternary structure, heterodimer of an alpha and a beta subunit. Beta-8 (ITGB8) associates with alpha-V (ITGAV) to form ITGAV:ITGB8. ITGAV:ITGB8 interacts with TGFB1.

Its subcellular location is the cell membrane. In terms of biological role, integrin alpha-V:beta-8 (ITGAV:ITGB8) is a receptor for fibronectin. It recognizes the sequence R-G-D in its ligands. Integrin alpha-V:beta-6 (ITGAV:ITGB6) mediates R-G-D-dependent release of transforming growth factor beta-1 (TGF-beta-1) from regulatory Latency-associated peptide (LAP), thereby playing a key role in TGF-beta-1 activation on the surface of activated regulatory T-cells (Tregs). Required during vasculogenesis. This is Integrin beta-8 from Mus musculus (Mouse).